We begin with the raw amino-acid sequence, 413 residues long: MMRTFEQLTASQQKEVERQLQLYMTGAHEVIPPEELKAKLVKSISTGTPLKIKLGLDPSAPDVHLGHTVVLNKLRQFQENGHIVQLLIGDFTGKIGDPTGKSAARKQLTDEEVQHNAKTYFEQFGKVLDPEKVELHYNSKWLKTLNLEDVIELAGKITVARLMERDDFEERIAMQKPISLHEFFYPLMQGYDSVVLESDIELGGTDQHFNVLMGRHFQERYNKEKQVVILMPLLEGLDGVEKMSKSKHNYIGINEHPNDMYGKTMSLPDSLMKKYIHLATDLELEEKKQLVKDLETGAVHPRDAKMLLARTIVRMYHGEKAAEAAEHSFKTVFQENSLPEDIPAVNWKGEKTIAMIDLLVKLKLLSSKSEARRMIQNGGVRIDGEKVTDVHAKAEIRENMIIQVGKRKFLKLQ.

The 'HIGH' region motif lies at 58-67; it reads PSAPDVHLGH. 2 repeat units span residues 89–94 and 96–101. Residues 89–101 are 2 X 6 AA tandem repeats; the sequence is GDFTGKIGDPTGK. Residues 242–246 carry the 'KMSKS' region motif; sequence KMSKS. Lys-245 is a binding site for ATP. Residues 353 to 413 enclose the S4 RNA-binding domain; sequence IAMIDLLVKL…VGKRKFLKLQ (61 aa).

It belongs to the class-I aminoacyl-tRNA synthetase family. TyrS type 2 subfamily. As to quaternary structure, homodimer.

The protein resides in the cytoplasm. It catalyses the reaction tRNA(Tyr) + L-tyrosine + ATP = L-tyrosyl-tRNA(Tyr) + AMP + diphosphate + H(+). Catalyzes the attachment of tyrosine to tRNA(Tyr) in a two-step reaction: tyrosine is first activated by ATP to form Tyr-AMP and then transferred to the acceptor end of tRNA(Tyr). This chain is Tyrosine--tRNA ligase 2, found in Bacillus subtilis (strain 168).